The following is a 173-amino-acid chain: Co-chaperone protein HscB homolog (173 aa).

In terms of domain architecture, J spans N3–I75.

Belongs to the HscB family. As to quaternary structure, interacts with HscA and stimulates its ATPase activity.

Functionally, co-chaperone involved in the maturation of iron-sulfur cluster-containing proteins. Seems to help targeting proteins to be folded toward HscA. The protein is Co-chaperone protein HscB homolog of Haemophilus ducreyi (strain 35000HP / ATCC 700724).